Consider the following 116-residue polypeptide: Iron-sulfur cluster insertion protein ErpA (116 aa).

Residues C44, C108, and C110 each contribute to the iron-sulfur cluster site.

It belongs to the HesB/IscA family. Homodimer. Iron-sulfur cluster serves as cofactor.

Its function is as follows. Required for insertion of 4Fe-4S clusters for at least IspG. The polypeptide is Iron-sulfur cluster insertion protein ErpA (Aeromonas salmonicida (strain A449)).